The chain runs to 453 residues: MDGTIKEALSVVSDDQSLFDSAYGASSHLSKADMTASANPDYGQPHKINPIPPQQDWINQPMRVNIKREYEHMNGSRESPVDCSINKCSKLIGGSEGNAMTYTYMDEKNGPPPPNMTTNERRVIVPADPALWSQDHVRQWLEWAIKEYGLVEIDCSLFQNIDGKELCKMSKEDFLRSTSIYNTEVLLSHLNYLRDSSSSLGYNTQAHTDQSSRLTAKEDPSYEAVRRSGWGNSMSSPVTKSPPMGGTQNVNKSGDQQRSQPDPYQILGPTSSRLANPGSGQIQLWQFLLELLSDSSNASCITWEGTNGEFKMTDPDEVARRWGERKSKPNMNYDKLSRALRYYYDKSIMTKVHGKRYAYKFDFHGIAQALQPHPTDTSMYKYPSEFSYMPSYHSHQQKVNFVPSHPSSMPVTSSGFFGATSPYWNSPSANIYPNPNVPRHPNTHVQSHLGGFY.

The region spanning 111 to 197 is the PNT domain; sequence PPPPNMTTNE…SHLNYLRDSS (87 aa). Residues 201-214 show a composition bias toward polar residues; it reads GYNTQAHTDQSSRL. The tract at residues 201-273 is disordered; the sequence is GYNTQAHTDQ…YQILGPTSSR (73 aa). Over residues 215 to 226 the composition is skewed to basic and acidic residues; sequence TAKEDPSYEAVR. 2 stretches are compositionally biased toward polar residues: residues 230 to 239 and 246 to 273; these read WGNSMSSPVT and GTQNVNKSGDQQRSQPDPYQILGPTSSR. Positions 282-362 form a DNA-binding region, ETS; that stretch reads IQLWQFLLEL…HGKRYAYKFD (81 aa).

This sequence belongs to the ETS family.

Its subcellular location is the nucleus. The polypeptide is Retroviral integration site protein Fli-1 homolog (fli1) (Xenopus laevis (African clawed frog)).